A 349-amino-acid chain; its full sequence is Protein AMBP (349 aa).

A signal peptide spans 1–19 (MQGLGALFLLLTACLTLKA). 3-hydroxy-L-kynurenine contacts are provided by cysteine 52 and lysine 110. An intrachain disulfide couples cysteine 90 to cysteine 187. Asparagine 114 carries N-linked (GlcNAc...) asparagine glycosylation. 3-hydroxy-L-kynurenine contacts are provided by lysine 136 and lysine 148. Residue serine 214 is glycosylated (O-linked (Xyl...) (chondroitin sulfate) serine). Disulfide bonds link cysteine 230/cysteine 280, cysteine 239/cysteine 263, cysteine 255/cysteine 276, cysteine 286/cysteine 336, cysteine 295/cysteine 319, and cysteine 311/cysteine 332. 2 consecutive BPTI/Kunitz inhibitor domains span residues 230-280 (CQLN…LQTC) and 286-336 (CNLP…KEYC). Asparagine 233 is a glycosylation site (N-linked (GlcNAc...) asparagine).

In the N-terminal section; belongs to the calycin superfamily. Lipocalin family. As to quaternary structure, monomer. Homodimer. In plasma, it occurs as a monomer or dimer and in covalently-linked complexes with immunoglobulin A (IgA), ALB/albumin and F2/prothrombin. Chromophore-bound alpha-1-microglobulin interacts with the constant region of immunoglobulin A. Chromophore-bound alpha-1-microglobulin interacts with ALB with molar ratio 2:1 and 1:1; this interaction does not prevent fatty acid binding to ALB. Interacts with F2/prothrombin (via N-terminus) with molar ratio 2:1 and 1:1; this interaction does not prevent the activation of prothrombin to thrombin. Interacts with NDUFAB1, a subunit of mitochondrial complex I. Interacts with FN1. In terms of assembly, I-alpha-I plasma protease inhibitors are assembled from one or two heavy chains (HC) and one light chain, bikunin. Inter-alpha-inhibitor (I-alpha-I) is composed of ITIH1/HC1, ITIH2/HC2 and bikunin, and pre-alpha-inhibitor (P-alpha-I) of ITIH3/HC3 and bikunin. Interacts with TNFAIP6 (via Link domain). Monomer. Also occurs as a complex with tryptase in mast cells. Post-translationally, the precursor is proteolytically processed into separately functioning proteins. In terms of processing, 3-hydroxykynurenine, an oxidized tryptophan metabolite that is common in biological fluids, reacts with Cys-53, Lys-111, Lys-137, and Lys-149 to form heterogeneous polycyclic chromophores including hydroxanthommatin. The reaction by alpha-1-microglobulin is autocatalytic; the human protein forms chromophore even when expressed in insect and bacterial cells. The chromophore can react with accessible cysteines forming non-reducible thioether cross-links with other molecules of alpha-1-microglobulin or with other proteins such as Ig alpha-1 chain C region 'Cys-352'. Heavy chains are interlinked with bikunin via a chondroitin 4-sulfate bridge to the C-terminal aspartate. Post-translationally, proteolytically cleaved by PRSS3 at Kunitz domain 2. As to expression, expressed by the liver and secreted in plasma.

The protein resides in the secreted. The protein localises to the endoplasmic reticulum. It localises to the cytoplasm. Its subcellular location is the cytosol. It is found in the cell membrane. The protein resides in the nucleus membrane. The protein localises to the mitochondrion inner membrane. It localises to the extracellular space. Its subcellular location is the extracellular matrix. In terms of biological role, antioxidant and tissue repair protein with reductase, heme-binding and radical-scavenging activities. Removes and protects against harmful oxidants and repairs macromolecules in intravascular and extravascular spaces and in intracellular compartments. Intravascularly, plays a regulatory role in red cell homeostasis by preventing heme- and reactive oxygen species-induced cell damage. Binds and degrades free heme to protect fetal and adult red blood cells from hemolysis. Reduces extracellular methemoglobin, a Fe3+ (ferric) form of hemoglobin that cannot bind oxygen, back to the Fe2+ (ferrous) form deoxyhemoglobin, which has oxygen-carrying potential. Upon acute inflammation, inhibits oxidation of low-density lipoprotein particles by MPO and limits vascular damage. Extravascularly, protects from oxidation products formed on extracellular matrix structures and cell membranes. Catalyzes the reduction of carbonyl groups on oxidized collagen fibers and preserves cellular and extracellular matrix ultrastructures. Importantly, counteracts the oxidative damage at blood-placenta interface, preventing leakage of free fetal hemoglobin into the maternal circulation. Intracellularly, has a role in maintaining mitochondrial redox homeostasis. Bound to complex I of the respiratory chain of mitochondria, may scavenge free radicals and preserve mitochondrial ATP synthesis. Protects renal tubule epithelial cells from heme-induced oxidative damage to mitochondria. Reduces cytochrome c from Fe3+ (ferric) to the Fe2+ (ferrous) state through formation of superoxide anion radicals in the presence of ascorbate or NADH/NADPH electron donor cofactors, ascorbate being the preferred cofactor. Has a chaperone role in facilitating the correct folding of bikunin in the endoplasmic reticulum compartment. Functionally, kunitz-type serine protease inhibitor and structural component of extracellular matrix with a role in extracellular space remodeling and cell adhesion. Among others, has antiprotease activity toward kallikrein, a protease involved in airway inflammation; inhibits GZMK/granzyme, a granule-stored serine protease involved in NK and T cell cytotoxic responses; and inhibits PLG/plasmin, a protease required for activation of matrix metalloproteinases. As part of I-alpha-I complex, provides for the heavy chains to be transferred from I-alpha-I complex to hyaluronan in the presence of TNFAIP6, in a dynamic process that releases free bikunin and remodels extracellular matrix proteoglycan structures. Free bikunin, but not its heavy chain-bound form, acts as a potent protease inhibitor in airway secretions. Part of hyaluronan-rich extracellular matrix that surrounds oocyte during cumulus oophorus expansion, an indispensable process for proper ovulation. Also inhibits calcium oxalate crystallization. Kunitz-type serine protease inhibitor. Has high catalytic efficiency for F10/blood coagulation factor Xa and may act as an anticoagulant by inhibiting prothrombin activation. Inhibits trypsin and mast cell CMA1/chymase and tryptase proteases. The protein is Protein AMBP (Ambp) of Rattus norvegicus (Rat).